The following is a 245-amino-acid chain: NAD-dependent protein deacetylase (245 aa).

The 245-residue stretch at 1-245 (MLLLDKINEL…SIGKVLETVI (245 aa)) folds into the Deacetylase sirtuin-type domain. 8 residues coordinate NAD(+): Ala-26, Thr-30, Phe-37, Arg-38, Gln-107, Ile-109, Asp-110, and His-125. A nicotinamide-binding site is contributed by Phe-37. Nicotinamide-binding residues include Ile-109 and Asp-110. The active-site Proton acceptor is His-125. Zn(2+)-binding residues include Cys-133, Cys-136, Cys-155, and Cys-158. Thr-196, Ser-197, Asn-219, and Ile-237 together coordinate NAD(+).

The protein belongs to the sirtuin family. Class U subfamily. The cofactor is Zn(2+).

The protein resides in the cytoplasm. The catalysed reaction is N(6)-acetyl-L-lysyl-[protein] + NAD(+) + H2O = 2''-O-acetyl-ADP-D-ribose + nicotinamide + L-lysyl-[protein]. In terms of biological role, NAD-dependent protein deacetylase which modulates the activities of several enzymes which are inactive in their acetylated form. This is NAD-dependent protein deacetylase from Clostridium acetobutylicum (strain ATCC 824 / DSM 792 / JCM 1419 / IAM 19013 / LMG 5710 / NBRC 13948 / NRRL B-527 / VKM B-1787 / 2291 / W).